We begin with the raw amino-acid sequence, 146 residues long: D-aminoacyl-tRNA deacylase (146 aa).

The Gly-cisPro motif, important for rejection of L-amino acids signature appears at 138–139 (GP).

Belongs to the DTD family. Homodimer.

The protein resides in the cytoplasm. It catalyses the reaction glycyl-tRNA(Ala) + H2O = tRNA(Ala) + glycine + H(+). It carries out the reaction a D-aminoacyl-tRNA + H2O = a tRNA + a D-alpha-amino acid + H(+). An aminoacyl-tRNA editing enzyme that deacylates mischarged D-aminoacyl-tRNAs. Also deacylates mischarged glycyl-tRNA(Ala), protecting cells against glycine mischarging by AlaRS. Acts via tRNA-based rather than protein-based catalysis; rejects L-amino acids rather than detecting D-amino acids in the active site. By recycling D-aminoacyl-tRNA to D-amino acids and free tRNA molecules, this enzyme counteracts the toxicity associated with the formation of D-aminoacyl-tRNA entities in vivo and helps enforce protein L-homochirality. This chain is D-aminoacyl-tRNA deacylase, found in Tolumonas auensis (strain DSM 9187 / NBRC 110442 / TA 4).